The sequence spans 403 residues: Ribonuclease T2-like (403 aa).

The N-terminal stretch at 1 to 19 (MLALILTISICIFLKGSTC) is a signal peptide. 4 cysteine pairs are disulfide-bonded: C36/C55, C44/C91, C54/C158, and C99/C150. N78 is a glycosylation site (N-linked (GlcNAc...) asparagine). Catalysis depends on residues H84, E143, and H147. Residue N175 is glycosylated (N-linked (GlcNAc...) asparagine). A disulfide bridge connects residues C224 and C259. The segment at 268–288 (PKNGFNPGPQPPKSPRKGYLE) is disordered.

Belongs to the RNase T2 family.

The protein resides in the vacuole lumen. It localises to the cytoplasm. It carries out the reaction a ribonucleotidyl-ribonucleotide-RNA + H2O = a 3'-end 3'-phospho-ribonucleotide-RNA + a 5'-end dephospho-ribonucleoside-RNA + H(+). In terms of biological role, rnase which modulates cell survival under stress conditions. Released from the vacuole to the cytoplasm during stress to promote tRNA and rRNA cleavage and to activate separately a downstream pathway that promotes cell death. Involved in cell size, vacuolar morphology and growth at high temperatures and high salt concentration. This Debaryomyces hansenii (strain ATCC 36239 / CBS 767 / BCRC 21394 / JCM 1990 / NBRC 0083 / IGC 2968) (Yeast) protein is Ribonuclease T2-like (RNY1).